Consider the following 197-residue polypeptide: dITP/XTP pyrophosphatase (197 aa).

Substrate is bound at residue 8–13 (TGNPGK). Mg(2+) contacts are provided by Glu40 and Asp69. The active-site Proton acceptor is Asp69. Substrate is bound by residues Ser70, 154–157 (FGYD), Lys177, and 182–183 (HR).

This sequence belongs to the HAM1 NTPase family. Homodimer. Mg(2+) is required as a cofactor.

The enzyme catalyses XTP + H2O = XMP + diphosphate + H(+). It carries out the reaction dITP + H2O = dIMP + diphosphate + H(+). The catalysed reaction is ITP + H2O = IMP + diphosphate + H(+). Its function is as follows. Pyrophosphatase that catalyzes the hydrolysis of nucleoside triphosphates to their monophosphate derivatives, with a high preference for the non-canonical purine nucleotides XTP (xanthosine triphosphate), dITP (deoxyinosine triphosphate) and ITP. Seems to function as a house-cleaning enzyme that removes non-canonical purine nucleotides from the nucleotide pool, thus preventing their incorporation into DNA/RNA and avoiding chromosomal lesions. This is dITP/XTP pyrophosphatase from Yersinia pseudotuberculosis serotype I (strain IP32953).